The sequence spans 587 residues: Aspartate--tRNA ligase (587 aa).

L-aspartate is bound at residue glutamate 174. The tract at residues glutamine 198–lysine 201 is aspartate. Arginine 220 provides a ligand contact to L-aspartate. ATP-binding positions include arginine 220 to glutamate 222 and glutamine 229. Histidine 443 lines the L-aspartate pocket. ATP is bound at residue glutamate 477. Arginine 484 contacts L-aspartate. Residue glycine 529–arginine 532 participates in ATP binding.

Belongs to the class-II aminoacyl-tRNA synthetase family. Type 1 subfamily. Homodimer.

The protein resides in the cytoplasm. It carries out the reaction tRNA(Asp) + L-aspartate + ATP = L-aspartyl-tRNA(Asp) + AMP + diphosphate. Catalyzes the attachment of L-aspartate to tRNA(Asp) in a two-step reaction: L-aspartate is first activated by ATP to form Asp-AMP and then transferred to the acceptor end of tRNA(Asp). This is Aspartate--tRNA ligase from Streptococcus pneumoniae (strain Hungary19A-6).